The sequence spans 765 residues: 1,4-alpha-glucan branching enzyme GlgB (765 aa).

Asp-431 serves as the catalytic Nucleophile. Catalysis depends on Glu-484, which acts as the Proton donor.

It belongs to the glycosyl hydrolase 13 family. GlgB subfamily. Monomer.

It catalyses the reaction Transfers a segment of a (1-&gt;4)-alpha-D-glucan chain to a primary hydroxy group in a similar glucan chain.. Its pathway is glycan biosynthesis; glycogen biosynthesis. Catalyzes the formation of the alpha-1,6-glucosidic linkages in glycogen by scission of a 1,4-alpha-linked oligosaccharide from growing alpha-1,4-glucan chains and the subsequent attachment of the oligosaccharide to the alpha-1,6 position. This Synechococcus sp. (strain CC9605) protein is 1,4-alpha-glucan branching enzyme GlgB.